A 359-amino-acid polypeptide reads, in one-letter code: Nicotinate N-methyltransferase 1 (359 aa).

Residue Asp-226 participates in S-adenosyl-L-methionine binding.

Belongs to the class I-like SAM-binding methyltransferase superfamily. Cation-independent O-methyltransferase family. Highly expressed in anthers, pistils, developing siliques, and developing seeds.

It is found in the cytoplasm. Its subcellular location is the cytosol. The enzyme catalyses nicotinate + S-adenosyl-L-methionine = N-methylnicotinate + S-adenosyl-L-homocysteine. Its function is as follows. Involved in nicotinate detoxification in planta. Catalyzes the conversion of nicotinate to N-methylnicotinate, which is a detoxified form of endogenous nicotinate in planta. The sequence is that of Nicotinate N-methyltransferase 1 from Arabidopsis thaliana (Mouse-ear cress).